Consider the following 282-residue polypeptide: Phosphate import ATP-binding protein PstB (282 aa).

Over residues 1–10 (MNMAESHLDP) the composition is skewed to basic and acidic residues. Residues 1-24 (MNMAESHLDPSKLATGPAGAGAAT) form a disordered region. Low complexity predominate over residues 14–24 (ATGPAGAGAAT). The 242-residue stretch at 36–277 (IEVKNLNFFY…PARKETEDYI (242 aa)) folds into the ABC transporter domain. Residue 68-75 (GPSGCGKS) coordinates ATP.

The protein belongs to the ABC transporter superfamily. Phosphate importer (TC 3.A.1.7) family. In terms of assembly, the complex is composed of two ATP-binding proteins (PstB), two transmembrane proteins (PstC and PstA) and a solute-binding protein (PstS).

The protein localises to the cell inner membrane. The enzyme catalyses phosphate(out) + ATP + H2O = ADP + 2 phosphate(in) + H(+). Part of the ABC transporter complex PstSACB involved in phosphate import. Responsible for energy coupling to the transport system. The chain is Phosphate import ATP-binding protein PstB from Burkholderia thailandensis (strain ATCC 700388 / DSM 13276 / CCUG 48851 / CIP 106301 / E264).